The following is a 542-amino-acid chain: Chaperonin GroEL 1 (542 aa).

Residues 30–33, K51, 87–91, G415, and D496 contribute to the ATP site; these read TLGP and DGTTT.

The protein belongs to the chaperonin (HSP60) family. In terms of assembly, forms a cylinder of 14 subunits composed of two heptameric rings stacked back-to-back. Interacts with the co-chaperonin GroES.

Its subcellular location is the cytoplasm. The enzyme catalyses ATP + H2O + a folded polypeptide = ADP + phosphate + an unfolded polypeptide.. Together with its co-chaperonin GroES, plays an essential role in assisting protein folding. The GroEL-GroES system forms a nano-cage that allows encapsulation of the non-native substrate proteins and provides a physical environment optimized to promote and accelerate protein folding. This is Chaperonin GroEL 1 from Sinorhizobium fredii (strain NBRC 101917 / NGR234).